Here is a 79-residue protein sequence, read N- to C-terminus: Putative transmembrane protein ORF17 (79 aa).

A run of 2 helical transmembrane segments spans residues 8-28 and 50-70; these read LMIYFFLPVSYLLVGFVIMYY and VFVMILLIWPFFLFLVVTTTI.

The protein localises to the host membrane. This is Putative transmembrane protein ORF17 from Haloarcula hispanica (His1V).